Reading from the N-terminus, the 381-residue chain is Homoserine O-succinyltransferase (381 aa).

The AB hydrolase-1 domain occupies 45–360 (NAVLVCHALN…PHGHDAFLLD (316 aa)). The active-site Nucleophile is S151. R221 contributes to the substrate binding site. Active-site residues include D321 and H354. D355 serves as a coordination point for substrate.

Belongs to the AB hydrolase superfamily. MetX family. As to quaternary structure, homodimer.

Its subcellular location is the cytoplasm. The enzyme catalyses L-homoserine + succinyl-CoA = O-succinyl-L-homoserine + CoA. It participates in amino-acid biosynthesis; L-methionine biosynthesis via de novo pathway; O-succinyl-L-homoserine from L-homoserine: step 1/1. In terms of biological role, transfers a succinyl group from succinyl-CoA to L-homoserine, forming succinyl-L-homoserine. The polypeptide is Homoserine O-succinyltransferase (Burkholderia cenocepacia (strain HI2424)).